Reading from the N-terminus, the 275-residue chain is 3-methyl-2-oxobutanoate hydroxymethyltransferase (275 aa).

Residues Asp-44 and Asp-83 each contribute to the Mg(2+) site. 3-methyl-2-oxobutanoate-binding positions include 44–45 (DS), Asp-83, and Lys-113. Glu-115 provides a ligand contact to Mg(2+). Glu-182 serves as the catalytic Proton acceptor.

Belongs to the PanB family. As to quaternary structure, homodecamer; pentamer of dimers. Mg(2+) is required as a cofactor.

The protein localises to the cytoplasm. The enzyme catalyses 3-methyl-2-oxobutanoate + (6R)-5,10-methylene-5,6,7,8-tetrahydrofolate + H2O = 2-dehydropantoate + (6S)-5,6,7,8-tetrahydrofolate. It functions in the pathway cofactor biosynthesis; (R)-pantothenate biosynthesis; (R)-pantoate from 3-methyl-2-oxobutanoate: step 1/2. Its function is as follows. Catalyzes the reversible reaction in which hydroxymethyl group from 5,10-methylenetetrahydrofolate is transferred onto alpha-ketoisovalerate to form ketopantoate. The protein is 3-methyl-2-oxobutanoate hydroxymethyltransferase of Clostridioides difficile (strain 630) (Peptoclostridium difficile).